The primary structure comprises 357 residues: Protein ATP1B4 (357 aa).

The Nuclear segment spans residues M1 to S110. Positions Y15–N80 are disordered. Acidic residues predominate over residues E52 to G73. The helical; Signal-anchor for type II membrane protein transmembrane segment at L111–M131 threads the bilayer. Topologically, residues Y132–T357 are perinuclear space.

This sequence belongs to the X(+)/potassium ATPases subunit beta family. In terms of assembly, associates with a SMAD7-transcriptional complex. Interacts with SNW1 and TOR1AIP1. According to PubMed:17592128, does not associate with known Na,K-ATPase alpha-subunits. In terms of tissue distribution, highly expressed in skeletal muscle and at a lower level in heart.

Its subcellular location is the nucleus inner membrane. Its function is as follows. May act as a transcriptional coregulator during muscle development through its interaction with SNW1. Has lost its ancestral function as a Na,K-ATPase beta-subunit. The protein is Protein ATP1B4 (ATP1B4) of Homo sapiens (Human).